The primary structure comprises 179 residues: SCAN domain-containing protein 1 (179 aa).

The disordered stretch occupies residues 1–104; the sequence is MAATEPILAA…PGPAGSRLGP (104 aa). The span at 52 to 80 shows a compositional bias: low complexity; it reads SPNAAVPEAIPTPRAAASAALELPLGPAP. The 59-residue stretch at 108–166 folds into the SCAN box domain; sequence RQRFRQFRYQDAAGPREAFRQLRELSRQWLRPDIRTKEQIVEMLVQEQLLAILPEAARA.

As to quaternary structure, interacts with ZNF202.

Its subcellular location is the nucleus. Its function is as follows. May regulate transcriptional activity. This Homo sapiens (Human) protein is SCAN domain-containing protein 1 (SCAND1).